Here is a 383-residue protein sequence, read N- to C-terminus: Opsin Rh3 (383 aa).

Over 1–57 (MESGNVSSSLFGNVSTALRPEARLSAETRLLGWNVPPEELRHIPEHWLTYPEPPESM) the chain is Extracellular. A glycan (N-linked (GlcNAc...) asparagine) is linked at asparagine 13. The helical transmembrane segment at 58 to 82 (NYLLGTLYIFFTLMSMLGNGLVIWV) threads the bilayer. The Cytoplasmic portion of the chain corresponds to 83 to 94 (FSAAKSLRTPSN). A helical transmembrane segment spans residues 95–119 (ILVINLAFCDFMMMVKTPIFIYNSF). Residues 120–133 (HQGYALGHLGCQIF) lie on the Extracellular side of the membrane. Residues cysteine 130 and cysteine 207 are joined by a disulfide bond. Residues 134–153 (GIIGSYTGIAAGATNAFIAY) traverse the membrane as a helical segment. Residues 154-171 (DRFNVITRPMEGKMTHGK) are Cytoplasmic-facing. The helical transmembrane segment at 172-196 (AIAMIIFIYMYATPWVVACYTETWG) threads the bilayer. Residues 197–220 (RFVPEGYLTSCTFDYLTDNFDTRL) are Extracellular-facing. Residues 221 to 248 (FVACIFFFSFVCPTTMITYYYSQIVGHV) traverse the membrane as a helical segment. Over 249–284 (FSHEKALRDQAKKMNVESLRSNVDKNKETAEIRIAK) the chain is Cytoplasmic. Residues 285-308 (AAITICFLFFCSWTPYGVMSLIGA) traverse the membrane as a helical segment. The Extracellular segment spans residues 309–316 (FGDKTLLT). A helical membrane pass occupies residues 317 to 341 (PGATMIPACACKMVACIDPFVYAIS). Lysine 328 bears the N6-(retinylidene)lysine mark. At 342-383 (HPRYRMELQKRCPWLALNEKAPESSAVASTSTTQEPQQTTAA) the chain is on the cytoplasmic side. The tract at residues 362–383 (APESSAVASTSTTQEPQQTTAA) is disordered. Low complexity predominate over residues 369–383 (ASTSTTQEPQQTTAA).

Belongs to the G-protein coupled receptor 1 family. Opsin subfamily. Phosphorylated on some or all of the serine and threonine residues present in the C-terminal region.

It localises to the membrane. In terms of biological role, visual pigments are the light-absorbing molecules that mediate vision. They consist of an apoprotein, opsin, covalently linked to cis-retinal. The polypeptide is Opsin Rh3 (Rh3) (Drosophila melanogaster (Fruit fly)).